Consider the following 265-residue polypeptide: Neutrophil elastase (265 aa).

An N-terminal signal peptide occupies residues 1–26 (MALGRLSSRTLAAMLLALFLGGPALA). The Peptidase S1 domain maps to 29–247 (IVGGRPARPH…FADWINSIIR (219 aa)). Cys-54 and Cys-70 are disulfide-bonded. Catalysis depends on charge relay system residues His-69 and Asp-116. N-linked (GlcNAc...) asparagine glycosylation is found at Asn-123 and Asn-172. Intrachain disulfides connect Cys-150–Cys-208, Cys-180–Cys-187, and Cys-198–Cys-223. Ser-202 functions as the Charge relay system in the catalytic mechanism.

The protein belongs to the peptidase S1 family. Elastase subfamily. As to quaternary structure, interacts with NOTCH2NL.

It carries out the reaction Hydrolysis of proteins, including elastin. Preferential cleavage: Val-|-Xaa &gt; Ala-|-Xaa.. In terms of biological role, serine protease that modifies the functions of natural killer cells, monocytes and granulocytes. Inhibits C5a-dependent neutrophil enzyme release and chemotaxis. Promotes blood coagulation. Through the activation of the platelet fibrinogen receptor integrin alpha-IIb/beta-3, potentiates platelet aggregation induced by a threshold concentration of cathepsin G (CTSG). Cleaves and thus inactivates tissue factor pathway inhibitor (TFPI). Capable of killing E.coli; probably digests outer membrane protein A (ompA) in E.coli. The chain is Neutrophil elastase (Elane) from Mus musculus (Mouse).